The following is a 33-amino-acid chain: Toxin BcV (33 aa).

Cysteine 6 and cysteine 30 are oxidised to a cystine.

It localises to the secreted. Its subcellular location is the nematocyst. Potently and reversibly blocks mammalian Kv11/KCNH/ERG voltage-gated potassium channels. Acts as a gating-modifier toxin that shifts the voltage-dependence of ERG activation in the positive direction and suppresses its current amplitudes elicited by strong depolarizing pulses that maximally activate the channels. In Bunodosoma caissarum (Sea anemone), this protein is Toxin BcV.